A 476-amino-acid chain; its full sequence is G-patch domain and KOW motifs-containing protein (476 aa).

Residues 1–96 (MADSKEGVLP…PGPSTDTGAL (96 aa)) are disordered. Residue Ala-2 is modified to N-acetylalanine. Lys-5 is covalently cross-linked (Glycyl lysine isopeptide (Lys-Gly) (interchain with G-Cter in SUMO2)). Positions 13-26 (AASTAPISFGFTRT) are enriched in polar residues. The residue at position 27 (Ser-27) is a Phosphoserine; by PKA. Residues Ser-35 and Ser-42 each carry the phosphoserine modification. The span at 43–58 (PEEKDFLKTVEGRELQ) shows a compositional bias: basic and acidic residues. Phosphoserine is present on Ser-115. The G-patch domain occupies 164–210 (VEAYGLAMLRGMGWKPGEGIGRTFNQVVKPRVNSLRPKGLGLGANLT). Residues 203-244 (LGLGANLTEAQALTPTGPSRMPRPDEEQEKDKEDQPQGLVPG) form a disordered region. Polar residues predominate over residues 210-219 (TEAQALTPTG). Thr-216 is modified (phosphothreonine). Over residues 224-237 (PRPDEEQEKDKEDQ) the composition is skewed to basic and acidic residues. The KOW 1 domain occupies 240-267 (GLVPGGAVVVLSGPHRGLYGKVEGLDPD). The residue at position 316 (Thr-316) is a Phosphothreonine; by PKA. The segment at 327-353 (DNSERKRKHLPDRQDGPAAKSEKAAPR) is disordered. Positions 337 to 351 (PDRQDGPAAKSEKAA) are enriched in basic and acidic residues. Residues 415–442 (PKAEGDRVMVVLGPQTGRVGHLLSRDRA) enclose the KOW 2 domain. Position 471 is a phosphoserine (Ser-471). Thr-473 carries the phosphothreonine modification.

Belongs to the MOS2 family. In terms of assembly, component of the minor spliceosome, which splices U12-type introns. Interacts with PRKX. Interacts with DHX16. Interacts with PRKACB. In terms of processing, phosphorylation regulates its ability to bind RNA.

It localises to the nucleus. In terms of biological role, RNA-binding protein involved in pre-mRNA splicing. As a component of the minor spliceosome, involved in the splicing of U12-type introns in pre-mRNAs. The sequence is that of G-patch domain and KOW motifs-containing protein (GPKOW) from Homo sapiens (Human).